The sequence spans 100 residues: Small ribosomal subunit protein uS14c (100 aa).

Belongs to the universal ribosomal protein uS14 family. In terms of assembly, part of the 30S ribosomal subunit.

Its subcellular location is the plastid. It is found in the chloroplast. Its function is as follows. Binds 16S rRNA, required for the assembly of 30S particles. The polypeptide is Small ribosomal subunit protein uS14c (Fagopyrum esculentum subsp. ancestrale (Wild buckwheat)).